The chain runs to 364 residues: Anhydro-N-acetylmuramic acid kinase (364 aa).

Residue 12–19 (GTSHDAID) participates in ATP binding.

It belongs to the anhydro-N-acetylmuramic acid kinase family.

It catalyses the reaction 1,6-anhydro-N-acetyl-beta-muramate + ATP + H2O = N-acetyl-D-muramate 6-phosphate + ADP + H(+). Its pathway is amino-sugar metabolism; 1,6-anhydro-N-acetylmuramate degradation. It functions in the pathway cell wall biogenesis; peptidoglycan recycling. Catalyzes the specific phosphorylation of 1,6-anhydro-N-acetylmuramic acid (anhMurNAc) with the simultaneous cleavage of the 1,6-anhydro ring, generating MurNAc-6-P. Is required for the utilization of anhMurNAc either imported from the medium or derived from its own cell wall murein, and thus plays a role in cell wall recycling. This Gamma-proteobacterium EBAC31A08 protein is Anhydro-N-acetylmuramic acid kinase.